A 237-amino-acid chain; its full sequence is UPF0173 metal-dependent hydrolase BruAb2_0628 (237 aa).

It belongs to the UPF0173 family.

This is UPF0173 metal-dependent hydrolase BruAb2_0628 from Brucella abortus biovar 1 (strain 9-941).